The primary structure comprises 535 residues: CTP synthase (535 aa).

The interval 1-267 (MTKYIFVTGG…DQIVCDHLKL (267 aa)) is amidoligase domain. CTP is bound at residue serine 13. Serine 13 serves as a coordination point for UTP. 14 to 19 (SLGKGI) provides a ligand contact to ATP. Tyrosine 54 is an L-glutamine binding site. Aspartate 71 is an ATP binding site. Residues aspartate 71 and glutamate 141 each contribute to the Mg(2+) site. Residues 148–150 (DIE), 188–193 (KTKPTQ), and lysine 224 contribute to the CTP site. Residues 188 to 193 (KTKPTQ) and lysine 224 each bind UTP. 240–242 (RDA) lines the ATP pocket. Positions 292 to 534 (KIALVGKYVE…VRASITNKES (243 aa)) constitute a Glutamine amidotransferase type-1 domain. Residue glycine 354 coordinates L-glutamine. The Nucleophile; for glutamine hydrolysis role is filled by cysteine 381. Residues 382–385 (LGMQ), glutamate 405, and arginine 462 each bind L-glutamine. Catalysis depends on residues histidine 507 and glutamate 509.

It belongs to the CTP synthase family. Homotetramer.

It carries out the reaction UTP + L-glutamine + ATP + H2O = CTP + L-glutamate + ADP + phosphate + 2 H(+). The enzyme catalyses L-glutamine + H2O = L-glutamate + NH4(+). The catalysed reaction is UTP + NH4(+) + ATP = CTP + ADP + phosphate + 2 H(+). It functions in the pathway pyrimidine metabolism; CTP biosynthesis via de novo pathway; CTP from UDP: step 2/2. Its activity is regulated as follows. Allosterically activated by GTP, when glutamine is the substrate; GTP has no effect on the reaction when ammonia is the substrate. The allosteric effector GTP functions by stabilizing the protein conformation that binds the tetrahedral intermediate(s) formed during glutamine hydrolysis. Inhibited by the product CTP, via allosteric rather than competitive inhibition. In terms of biological role, catalyzes the ATP-dependent amination of UTP to CTP with either L-glutamine or ammonia as the source of nitrogen. Regulates intracellular CTP levels through interactions with the four ribonucleotide triphosphates. The chain is CTP synthase from Bacillus cereus (strain G9842).